We begin with the raw amino-acid sequence, 147 residues long: Putative toxin MJ0142 (147 aa).

This sequence belongs to the UPF0332 family.

Its function is as follows. Putative toxin component of a putative type VII toxin-antitoxin (TA) system. Its cognate antitoxin might be MJ0141. The protein is Putative toxin MJ0142 of Methanocaldococcus jannaschii (strain ATCC 43067 / DSM 2661 / JAL-1 / JCM 10045 / NBRC 100440) (Methanococcus jannaschii).